Reading from the N-terminus, the 345-residue chain is Ribosome production factor 1 (345 aa).

2 disordered regions span residues 1 to 57 and 70 to 105; these read MAKA…ISEI and WKQQQRKEKLAAKKKLKREREALGDKAPPKPVPKTI. A compositionally biased stretch (basic and acidic residues) spans 87 to 97; it reads REREALGDKAP. The Brix domain maps to 142-325; sequence PKILITTSDR…LRSLQKGTFD (184 aa). The RNA-binding stretch occupies residues 303–320; sequence VGIQELGPRFTLKLRSLQ.

The protein resides in the nucleus. It localises to the nucleolus. May be required for ribosome biogenesis. The polypeptide is Ribosome production factor 1 (Rpf1) (Rattus norvegicus (Rat)).